Reading from the N-terminus, the 306-residue chain is UDP-3-O-acyl-N-acetylglucosamine deacetylase (306 aa).

Zn(2+)-binding residues include His79, His238, and Asp242. His265 (proton donor) is an active-site residue.

The protein belongs to the LpxC family. The cofactor is Zn(2+).

It carries out the reaction a UDP-3-O-[(3R)-3-hydroxyacyl]-N-acetyl-alpha-D-glucosamine + H2O = a UDP-3-O-[(3R)-3-hydroxyacyl]-alpha-D-glucosamine + acetate. Its pathway is glycolipid biosynthesis; lipid IV(A) biosynthesis; lipid IV(A) from (3R)-3-hydroxytetradecanoyl-[acyl-carrier-protein] and UDP-N-acetyl-alpha-D-glucosamine: step 2/6. Functionally, catalyzes the hydrolysis of UDP-3-O-myristoyl-N-acetylglucosamine to form UDP-3-O-myristoylglucosamine and acetate, the committed step in lipid A biosynthesis. In Shewanella denitrificans (strain OS217 / ATCC BAA-1090 / DSM 15013), this protein is UDP-3-O-acyl-N-acetylglucosamine deacetylase.